We begin with the raw amino-acid sequence, 947 residues long: Protocadherin alpha-4 (947 aa).

Residues 1-29 form the signal peptide; sequence MEFSWGSGQESQRLLLSFLLLAIWEAGNS. 6 consecutive Cadherin domains span residues 30–133, 134–242, 243–350, 351–455, 456–565, and 573–681; these read QIHY…PPRF, PTTQ…APVF, DRSL…VPEL, EFKS…APVF, AQPE…APTL, and SGGI…APSR. Residues 30–697 lie on the Extracellular side of the membrane; sequence QIHYSIPEEA…HSEASLVDVN (668 aa). A disulfide bridge connects residues cysteine 96 and cysteine 102. N-linked (GlcNAc...) asparagine glycosylation is found at asparagine 257 and asparagine 265. An O-linked (Man) threonine glycan is attached at threonine 438. O-linked (Man) serine glycosylation is found at serine 440 and serine 442. Asparagine 548 carries an N-linked (GlcNAc...) asparagine glycan. Residues 698-718 form a helical membrane-spanning segment; that stretch reads VYLIIAICAVSSLLVLTLLLY. At 719–947 the chain is on the cytoplasmic side; the sequence is TALRCSTVPS…GNSTTDNSDQ (229 aa). PXXP repeat units follow at residues 734–737, 774–777, 796–799, 829–832, 870–873, and 888–891; these read PPKP, PSLS, PRQP, PGGP, PGNP, and PGSP. The tract at residues 734–891 is 6 X 4 AA repeats of P-X-X-P; it reads PPKPVMVCSS…PDKFIIPGSP (158 aa). The interval 738 to 947 is required for interaction with FYN; sequence VMVCSSAVGS…GNSTTDNSDQ (210 aa). Disordered regions lie at residues 761–805 and 824–853; these read GEYP…DWRY and ILRA…EVSP. Positions 891-947 are disordered; the sequence is PAIISIRQEPANNQIDKSDFITFGKKEETKKKKKKKKGNKTQEKKEKGNSTTDNSDQ. Basic and acidic residues predominate over residues 906-920; sequence DKSDFITFGKKEETK.

Forms homodimers in trans (molecules expressed by two different cells). Forms promiscuous heterodimers in cis (at the plasma membrane of the same cell) with other protocadherins. Interacts with FYN. Detected in brain throughout embryonic development. Detected in adult brain, in particular in cerebellum and forebrain.

It is found in the cell membrane. Functionally, calcium-dependent cell-adhesion protein involved in cells self-recognition and non-self discrimination. Thereby, it is involved in the establishment and maintenance of specific neuronal connections in the brain. This Mus musculus (Mouse) protein is Protocadherin alpha-4.